The primary structure comprises 297 residues: Protoheme IX farnesyltransferase (297 aa).

Helical transmembrane passes span valine 23 to proline 43, valine 49 to isoleucine 69, isoleucine 90 to leucine 110, leucine 117 to leucine 137, asparagine 144 to alanine 164, alanine 171 to leucine 191, arginine 215 to isoleucine 235, serine 238 to tryptophan 258, and isoleucine 277 to alanine 297.

It belongs to the UbiA prenyltransferase family. Protoheme IX farnesyltransferase subfamily.

Its subcellular location is the cell inner membrane. The enzyme catalyses heme b + (2E,6E)-farnesyl diphosphate + H2O = Fe(II)-heme o + diphosphate. Its pathway is porphyrin-containing compound metabolism; heme O biosynthesis; heme O from protoheme: step 1/1. In terms of biological role, converts heme B (protoheme IX) to heme O by substitution of the vinyl group on carbon 2 of heme B porphyrin ring with a hydroxyethyl farnesyl side group. The sequence is that of Protoheme IX farnesyltransferase from Bordetella petrii (strain ATCC BAA-461 / DSM 12804 / CCUG 43448).